The following is an 888-amino-acid chain: uncharacterized protein (888 aa).

The N-terminal stretch at Met1–Ala20 is a signal peptide. The next 6 membrane-spanning stretches (helical) occupy residues Ile513–Ala533, Thr565–Ala585, Leu611–Ile631, Val649–Met669, Ile682–Ile702, and Leu781–Val801.

The protein belongs to the TrbL/VirB6 family.

It localises to the cell membrane. This is an uncharacterized protein from Rickettsia prowazekii (strain Madrid E).